The primary structure comprises 449 residues: UDP-N-acetylmuramoylalanine--D-glutamate ligase (449 aa).

Residue 118–124 (GTNGKTT) participates in ATP binding.

This sequence belongs to the MurCDEF family.

It localises to the cytoplasm. The catalysed reaction is UDP-N-acetyl-alpha-D-muramoyl-L-alanine + D-glutamate + ATP = UDP-N-acetyl-alpha-D-muramoyl-L-alanyl-D-glutamate + ADP + phosphate + H(+). It functions in the pathway cell wall biogenesis; peptidoglycan biosynthesis. Cell wall formation. Catalyzes the addition of glutamate to the nucleotide precursor UDP-N-acetylmuramoyl-L-alanine (UMA). This Staphylococcus carnosus (strain TM300) protein is UDP-N-acetylmuramoylalanine--D-glutamate ligase.